The sequence spans 338 residues: Adenylosuccinate synthetase (338 aa).

GTP contacts are provided by residues 12 to 18 (GDEGKGK) and 42 to 44 (GHT). Residue Asp13 is the Proton acceptor of the active site. 2 residues coordinate Mg(2+): Asp13 and Gly42. IMP-binding positions include 13-16 (DEGK), 40-43 (NAGH), Thr127, Arg141, Gln179, Thr194, and Arg256. The Proton donor role is filled by His43. Substrate is bound at residue 252 to 258 (TVTGRRR). Residues Arg258, 284–286 (CLD), and 324–326 (STG) each bind GTP.

This sequence belongs to the adenylosuccinate synthetase family. As to quaternary structure, homodimer. Mg(2+) serves as cofactor.

It is found in the cytoplasm. The enzyme catalyses IMP + L-aspartate + GTP = N(6)-(1,2-dicarboxyethyl)-AMP + GDP + phosphate + 2 H(+). The protein operates within purine metabolism; AMP biosynthesis via de novo pathway; AMP from IMP: step 1/2. Functionally, plays an important role in the de novo pathway of purine nucleotide biosynthesis. Catalyzes the first committed step in the biosynthesis of AMP from IMP. The polypeptide is Adenylosuccinate synthetase (Methanococcus maripaludis (strain C7 / ATCC BAA-1331)).